Here is a 311-residue protein sequence, read N- to C-terminus: MQEIQKNTKKEQYNLNKLQKRLRRNVGEAIADFNMIEEGDRIMVCLSGGKDSYTMLEILRNLQQSAPINFSLVAVNLDQKQPGFPEHILPAYLEQLGVEYKIVEENTYGIVKEKIPEGKTTCSLCSRLRRGILYRTATELGATKIALGHHRDDILQTLFLNMFYGGKMKGMPPKLMSDDGKHIVIRPLAYCREKDIIRFAEAKAFPIIPCNLCGSQPNLQRQVIADMLRDWDKRYPGRIETMFSAMQNVVPSHLCDTNLFDFKGITHGSEVVDGGDLAFDREEIPLQPAGWQPEEDDTSLEALRLDVIEVK.

Residues 47-52 carry the PP-loop motif motif; the sequence is SGGKDS. The [4Fe-4S] cluster site is built by cysteine 122, cysteine 125, and cysteine 213.

It belongs to the TtcA family. Homodimer. Requires Mg(2+) as cofactor. [4Fe-4S] cluster is required as a cofactor.

It is found in the cytoplasm. The enzyme catalyses cytidine(32) in tRNA + S-sulfanyl-L-cysteinyl-[cysteine desulfurase] + AH2 + ATP = 2-thiocytidine(32) in tRNA + L-cysteinyl-[cysteine desulfurase] + A + AMP + diphosphate + H(+). The protein operates within tRNA modification. Catalyzes the ATP-dependent 2-thiolation of cytidine in position 32 of tRNA, to form 2-thiocytidine (s(2)C32). The sulfur atoms are provided by the cysteine/cysteine desulfurase (IscS) system. The sequence is that of tRNA-cytidine(32) 2-sulfurtransferase from Salmonella paratyphi A (strain ATCC 9150 / SARB42).